A 236-amino-acid polypeptide reads, in one-letter code: uncharacterized protein (236 aa).

An N-terminal signal peptide occupies residues 1–24 (MRKKHFNMILKLALISSLLALAAS). N-linked (GlcNAc...) asparagine glycosylation is found at N59, N171, and N197.

The protein localises to the secreted. This is an uncharacterized protein from Caenorhabditis elegans.